The following is a 382-amino-acid chain: Acetylornithine deacetylase (382 aa).

His79 is a Zn(2+) binding site. The active site involves Asp81. Asp111 is a binding site for Zn(2+). Glu143 is an active-site residue. Residues Glu144, Glu168, and His354 each contribute to the Zn(2+) site.

It belongs to the peptidase M20A family. ArgE subfamily. As to quaternary structure, homodimer. It depends on Zn(2+) as a cofactor. Co(2+) serves as cofactor. Glutathione is required as a cofactor.

The protein localises to the cytoplasm. The catalysed reaction is N(2)-acetyl-L-ornithine + H2O = L-ornithine + acetate. The protein operates within amino-acid biosynthesis; L-arginine biosynthesis; L-ornithine from N(2)-acetyl-L-ornithine (linear): step 1/1. In terms of biological role, catalyzes the hydrolysis of the amide bond of N(2)-acetylated L-amino acids. Cleaves the acetyl group from N-acetyl-L-ornithine to form L-ornithine, an intermediate in L-arginine biosynthesis pathway, and a branchpoint in the synthesis of polyamines. This is Acetylornithine deacetylase from Pasteurella multocida (strain Pm70).